The primary structure comprises 213 residues: Ribonuclease HII (213 aa).

The RNase H type-2 domain maps to 18-213 (GLYAGVDEVG…RPVKERLAKN (196 aa)). The a divalent metal cation site is built by aspartate 24, glutamate 25, and aspartate 116.

It belongs to the RNase HII family. It depends on Mn(2+) as a cofactor. Requires Mg(2+) as cofactor.

It is found in the cytoplasm. The catalysed reaction is Endonucleolytic cleavage to 5'-phosphomonoester.. Functionally, endonuclease that specifically degrades the RNA of RNA-DNA hybrids. This chain is Ribonuclease HII, found in Shewanella sediminis (strain HAW-EB3).